Here is a 193-residue protein sequence, read N- to C-terminus: dCTP deaminase (193 aa).

DCTP-binding positions include 110-115 (RSSLAR), Asp-128, 136-138 (VLE), Tyr-171, Lys-178, and Gln-182. The active-site Proton donor/acceptor is the Glu-138. The interval 169–193 (RPYNRREDAKYRNQQGAVASRIDKD) is disordered.

The protein belongs to the dCTP deaminase family. As to quaternary structure, homotrimer.

The enzyme catalyses dCTP + H2O + H(+) = dUTP + NH4(+). Its pathway is pyrimidine metabolism; dUMP biosynthesis; dUMP from dCTP (dUTP route): step 1/2. In terms of biological role, catalyzes the deamination of dCTP to dUTP. In Escherichia coli O1:K1 / APEC, this protein is dCTP deaminase.